The primary structure comprises 320 residues: L-lactate dehydrogenase (320 aa).

NAD(+) is bound by residues Val-19, Asp-40, Arg-45, and 85–86 (GA). Substrate-binding residues include Gln-88 and Arg-94. Residues Ser-107, 124–126 (ITN), and Ser-149 contribute to the NAD(+) site. 126–129 (NPVD) contacts substrate. Residue 154–157 (DSAR) participates in substrate binding. Beta-D-fructose 1,6-bisphosphate contacts are provided by Arg-159 and His-174. His-181 acts as the Proton acceptor in catalysis. The residue at position 228 (Tyr-228) is a Phosphotyrosine. Position 237 (Thr-237) interacts with substrate.

The protein belongs to the LDH/MDH superfamily. LDH family. As to quaternary structure, homotetramer.

The protein localises to the cytoplasm. It catalyses the reaction (S)-lactate + NAD(+) = pyruvate + NADH + H(+). It functions in the pathway fermentation; pyruvate fermentation to lactate; (S)-lactate from pyruvate: step 1/1. Its activity is regulated as follows. Allosterically activated by fructose 1,6-bisphosphate (FBP). Functionally, catalyzes the conversion of lactate to pyruvate. This chain is L-lactate dehydrogenase, found in Bifidobacterium animalis subsp. lactis (strain AD011).